The primary structure comprises 901 residues: Inner capsid protein VP3 (901 aa).

It belongs to the turreted BTV-fold inner capsid family. In terms of assembly, homodecamer; each decamer is made up of two conformers of VP2, called VP2A and VP2B. 12 homodecamers assemble to form an icosahedral capsid.

The protein localises to the virion. Functionally, inner capsid protein that self-assembles to form an icosahedral capsid with a T=2 symmetry, which consists of 120 copies of VP2, with channels at each of its five-fold vertices. This capsid constitutes the innermost concentric layer of the viral mature particle. The protein is Inner capsid protein VP3 (Segment-3) of Bluetongue virus 13 (isolate USA) (BTV 13).